The sequence spans 269 residues: Ribonuclease HII (269 aa).

Residues 83-269 (YLIAGVDEVG…HRMSFLTNIL (187 aa)) form the RNase H type-2 domain. A divalent metal cation is bound by residues Asp89, Glu90, and Asp185.

The protein belongs to the RNase HII family. Mn(2+) is required as a cofactor. The cofactor is Mg(2+).

It localises to the cytoplasm. The catalysed reaction is Endonucleolytic cleavage to 5'-phosphomonoester.. Endonuclease that specifically degrades the RNA of RNA-DNA hybrids. This is Ribonuclease HII from Clostridium botulinum (strain ATCC 19397 / Type A).